A 799-amino-acid polypeptide reads, in one-letter code: Signal transducer and activator of transcription 5A (799 aa).

Phosphotyrosine is present on Y90. Residue S128 is modified to Phosphoserine. Positions 589-686 (WNDGAILGFV…EVFSKYYTPV (98 aa)) constitute an SH2 domain. Y682 is subject to Phosphotyrosine. Y699 carries the phosphotyrosine; by JAK2 modification. The disordered stretch occupies residues 778-799 (DSLDPRLSPPAGLFASTRGSLS). Position 785 is a phosphoserine (S785).

It belongs to the transcription factor STAT family. Forms a homodimer or a heterodimer with a related family member. Binds NR3C1. Interacts with NCOA1 and SOCS7. Interacts with ERBB4. Interacts with EBF4. Interacts with CD69. Post-translationally, ISGylated. In terms of processing, tyrosine phosphorylated in response to KITLG/SCF, IL2, IL3, IL7, IL15, CSF2/GMCSF, GH1, PRL, EPO and THPO. Activated KIT promotes phosphorylation on tyrosine residues and subsequent translocation to the nucleus. Tyrosine phosphorylated in response to constitutively activated FGFR1, FGFR2, FGFR3 and FGFR4. Tyrosine phosphorylation is required for DNA-binding activity and dimerization. Serine phosphorylation is also required for maximal transcriptional activity. Tyrosine phosphorylated in response to signaling via activated FLT3; wild-type FLT3 results in much weaker phosphorylation than constitutively activated mutant FLT3. Alternatively, can be phosphorylated by JAK2 at Tyr-699.

It is found in the cytoplasm. It localises to the nucleus. In terms of biological role, carries out a dual function: signal transduction and activation of transcription. Mediates cellular responses to the cytokine KITLG/SCF and other growth factors. May mediate cellular responses to activated FGFR1, FGFR2, FGFR3 and FGFR4. Binds to the GAS element and activates PRL-induced transcription. Regulates the expression of milk proteins during lactation. The sequence is that of Signal transducer and activator of transcription 5A (STAT5A) from Sus scrofa (Pig).